The primary structure comprises 264 residues: MRQQEVHDFLLRFFQANSCQIVDQGLGYMTVQLTVEMDKQIMNRPFYWHWREKTGGDPNPMKITFITDKENAPKDLDGEFIYFGAPRLFQIFKAVKQNGRFTRMYEKIESAGAKVPLQPWLGINVTISYQSDMKKDKLLSLGLHLVSGTIIEDFQSKLTQFSLTSQICDYCFTISPMIKPESGLKRMENYISKSAMQEPSDWAEQAVNRWKNDMTLLDKFYEHIEEKPEEYHLEKQALKTLYQPKISVEIENGGLFYLQNNISS.

This is an uncharacterized protein from Bacillus subtilis (strain 168).